A 448-amino-acid polypeptide reads, in one-letter code: UDP-N-acetylglucosamine--dolichyl-phosphate N-acetylglucosaminephosphotransferase (448 aa).

The chain crosses the membrane as a helical span at residues 24 to 44; it reads ALVAAVGFGIAGYLATDMLIP. Residues 58–60 and Glu70 contribute to the UDP-N-acetyl-alpha-D-glucosamine site; that span reads KDL. Helical transmembrane passes span 72–92 and 129–149; these read IGAIPAAVYLFVMFIYIPFIF and YLSAILCLESTVLLGIADDLF. A dolichyl phosphate-binding site is contributed by Lys156. 2 helical membrane-spanning segments follow: residues 157 to 177 and 202 to 222; these read FFLPAIAAIPLLMVYYVDFGV and YVYMASMAIFCPNSINILAGV. Dolichyl phosphate is bound at residue 210-218; the sequence is IFCPNSINI. Position 217 (Asn217) interacts with Mg(2+). Asn223 is a UDP-N-acetyl-alpha-D-glucosamine binding site. 4 helical membrane passes run 231–251, 256–276, 283–303, and 309–329; these read IVLAILALLNDLLYFSMGPLA, HRFSAVLIIPFLGVSLALWKW, VFVGDTYCYFAGMVFAVVGIL, and TMLLLFIPQIVNFIYSCPQLF. A Mg(2+)-binding site is contributed by Asp287. A UDP-N-acetyl-alpha-D-glucosamine-binding site is contributed by 336–338; that stretch reads RHR. A run of 2 helical transmembrane segments spans residues 387 to 407 and 419 to 439; these read EIISTSNMTLINLTLVWFGPM and LQFCIGILALLGRHAIGAIIF.

It belongs to the glycosyltransferase 4 family. It depends on Mg(2+) as a cofactor.

It is found in the endoplasmic reticulum membrane. It catalyses the reaction a di-trans,poly-cis-dolichyl phosphate + UDP-N-acetyl-alpha-D-glucosamine = an N-acetyl-alpha-D-glucosaminyl-diphospho-di-trans,poly-cis-dolichol + UMP. It functions in the pathway protein modification; protein glycosylation. Its activity is regulated as follows. Inhibited by natural nucleoside antibiotic tunicamycin, which acts as a structural analog and competitor of UDP-GlcNAc. UDP-N-acetylglucosamine--dolichyl-phosphate N-acetylglucosaminephosphotransferase that operates in the biosynthetic pathway of dolichol-linked oligosaccharides, the glycan precursors employed in protein asparagine (N)-glycosylation. The assembly of dolichol-linked oligosaccharides begins on the cytosolic side of the endoplasmic reticulum membrane and finishes in its lumen. The sequential addition of sugars to dolichol pyrophosphate produces dolichol-linked oligosaccharides containing fourteen sugars, including two GlcNAcs, nine mannoses and three glucoses. Once assembled, the oligosaccharide is transferred from the lipid to nascent proteins by oligosaccharyltransferases. Catalyzes the initial step of dolichol-linked oligosaccharide biosynthesis, transfering GlcNAc-1-P from cytosolic UDP-GlcNAc onto the carrier lipid dolichyl phosphate (P-dolichol), yielding GlcNAc-P-P-dolichol embedded in the cytoplasmic leaflet of the endoplasmic reticulum membrane. This Saccharomyces cerevisiae (strain ATCC 204508 / S288c) (Baker's yeast) protein is UDP-N-acetylglucosamine--dolichyl-phosphate N-acetylglucosaminephosphotransferase (ALG7).